Reading from the N-terminus, the 459-residue chain is Phosphoenolpyruvate carboxylase (459 aa).

Belongs to the PEPCase type 2 family. As to quaternary structure, homotetramer. Mg(2+) serves as cofactor.

The enzyme catalyses oxaloacetate + phosphate = phosphoenolpyruvate + hydrogencarbonate. Catalyzes the irreversible beta-carboxylation of phosphoenolpyruvate (PEP) to form oxaloacetate (OAA), a four-carbon dicarboxylic acid source for the tricarboxylic acid cycle. The chain is Phosphoenolpyruvate carboxylase from Pyrobaculum calidifontis (strain DSM 21063 / JCM 11548 / VA1).